The sequence spans 120 residues: Large ribosomal subunit protein uL18 (120 aa).

Belongs to the universal ribosomal protein uL18 family. In terms of assembly, part of the 50S ribosomal subunit; part of the 5S rRNA/L5/L18/L25 subcomplex. Contacts the 5S and 23S rRNAs.

Its function is as follows. This is one of the proteins that bind and probably mediate the attachment of the 5S RNA into the large ribosomal subunit, where it forms part of the central protuberance. This Rhodospirillum centenum (strain ATCC 51521 / SW) protein is Large ribosomal subunit protein uL18.